We begin with the raw amino-acid sequence, 406 residues long: Tryptophan synthase beta chain (406 aa).

Lys97 carries the post-translational modification N6-(pyridoxal phosphate)lysine.

It belongs to the TrpB family. As to quaternary structure, tetramer of two alpha and two beta chains. It depends on pyridoxal 5'-phosphate as a cofactor.

The catalysed reaction is (1S,2R)-1-C-(indol-3-yl)glycerol 3-phosphate + L-serine = D-glyceraldehyde 3-phosphate + L-tryptophan + H2O. It functions in the pathway amino-acid biosynthesis; L-tryptophan biosynthesis; L-tryptophan from chorismate: step 5/5. Its function is as follows. The beta subunit is responsible for the synthesis of L-tryptophan from indole and L-serine. The chain is Tryptophan synthase beta chain from Lacticaseibacillus casei (strain BL23) (Lactobacillus casei).